A 188-amino-acid polypeptide reads, in one-letter code: Peptidyl-prolyl cis-trans isomerase H (188 aa).

The residue at position 2 (Ala-2) is an N-acetylalanine. The PPIase cyclophilin-type domain occupies Phe-14–Leu-176.

It belongs to the cyclophilin-type PPIase family. PPIase H subfamily. In terms of assembly, interacts directly with PRPF4. Part of a heteromeric complex containing PPIH, PRPF3 and PRPF4 that is stable in the absence of RNA. Component of the U4/U6-U5 tri-snRNP complex composed of the U4, U6 and U5 snRNAs and at least PRPF3, PRPF4, PRPF6, PRPF8, PRPF31, SNRNP200, TXNL4A, SNRNP40, DDX23, CD2BP2, PPIH, SNU13, EFTUD2, SART1 and USP39. Heterodimer with PRPF18. Heterodimer with PRPF18.

The protein localises to the nucleus speckle. Its subcellular location is the cytoplasm. It carries out the reaction [protein]-peptidylproline (omega=180) = [protein]-peptidylproline (omega=0). With respect to regulation, inhibited by cyclosporin A. In terms of biological role, PPIase that catalyzes the cis-trans isomerization of proline imidic peptide bonds in oligopeptides and may therefore assist protein folding. Participates in pre-mRNA splicing. May play a role in the assembly of the U4/U5/U6 tri-snRNP complex, one of the building blocks of the spliceosome. May act as a chaperone. This Mus musculus (Mouse) protein is Peptidyl-prolyl cis-trans isomerase H (Ppih).